Here is a 377-residue protein sequence, read N- to C-terminus: Nitric oxide reductase FlRd-NAD(+) reductase (377 aa).

The protein belongs to the FAD-dependent oxidoreductase family. The cofactor is FAD.

Its subcellular location is the cytoplasm. It carries out the reaction 2 reduced [nitric oxide reductase rubredoxin domain] + NAD(+) + H(+) = 2 oxidized [nitric oxide reductase rubredoxin domain] + NADH. Its pathway is nitrogen metabolism; nitric oxide reduction. One of at least two accessory proteins for anaerobic nitric oxide (NO) reductase. Reduces the rubredoxin moiety of NO reductase. The chain is Nitric oxide reductase FlRd-NAD(+) reductase from Shigella sonnei (strain Ss046).